Reading from the N-terminus, the 35-residue chain is Photosystem II reaction center protein Y (35 aa).

Topologically, residues 1-4 (MDTR) are lumenal. The helical transmembrane segment at 5-23 (LLIVLLPIIAAASWAIYNI) threads the bilayer. Residues 24-35 (GKILLLQLTKRS) lie on the Stromal side of the membrane.

It belongs to the PsbY family. PSII is composed of 1 copy each of membrane proteins PsbA, PsbB, PsbC, PsbD, PsbE, PsbF, PsbH, PsbI, PsbJ, PsbK, PsbL, PsbM, PsbT, PsbX, PsbY, PsbZ, Psb30/Ycf12, at least 3 peripheral proteins of the oxygen-evolving complex and a large number of cofactors. It forms dimeric complexes.

Its subcellular location is the plastid. It localises to the chloroplast thylakoid membrane. Its function is as follows. Loosely associated component of the core of photosystem II (PSII), it is not always seen in crystals. PSII is a light-driven water plastoquinone oxidoreductase, using light energy to abstract electrons from H(2)O, generating a proton gradient subsequently used for ATP formation. The chain is Photosystem II reaction center protein Y from Cyanidioschyzon merolae (strain NIES-3377 / 10D) (Unicellular red alga).